The following is a 1058-amino-acid chain: Ubiquitin-like modifier-activating enzyme 1 (1058 aa).

The tract at residues 1 to 46 (MSSSPLSKKRRVSGPDPKPGSNCSPAQSALSEVSSVPTNGMAKNGS) is disordered. The residue at position 2 (Ser-2) is an N-acetylserine. Residues Ser-4, Ser-13, Ser-21, Ser-24, and Ser-46 each carry the phosphoserine modification. Over residues 21-38 (SNCSPAQSALSEVSSVPT) the composition is skewed to polar residues. Tyr-55 is subject to Phosphotyrosine. 2 consecutive repeat copies span residues 63 to 199 (GHEA…GQLF) and 459 to 611 (GSDF…QVVI). The 2 approximate repeats stretch occupies residues 63–611 (GHEAMKMLQT…GTKGNVQVVI (549 aa)). ATP is bound by residues Ala-478, Asp-504, Arg-515, Lys-528, and 576–577 (DN). Lys-528 is modified (N6-succinyllysine). The active-site Glycyl thioester intermediate is the Cys-632. Residue Lys-671 is modified to N6-acetyllysine. Thr-800 is subject to Phosphothreonine. Residues Ser-810, Ser-816, Ser-820, and Ser-835 each carry the phosphoserine modification. N6-acetyllysine is present on Lys-980.

The protein belongs to the ubiquitin-activating E1 family. In terms of assembly, monomer. Interacts with GAN (via BTB domain). In terms of processing, ISGylated. Ubiquitously expressed. In testis, expressed in A spermatogonia and spermatids but at very low levels in pachytene spermatocytes.

The protein resides in the cytoplasm. It is found in the mitochondrion. It localises to the nucleus. It carries out the reaction ATP + ubiquitin + [E1 ubiquitin-activating enzyme]-L-cysteine = AMP + diphosphate + S-ubiquitinyl-[E1 ubiquitin-activating enzyme]-L-cysteine.. It participates in protein modification; protein ubiquitination. Catalyzes the first step in ubiquitin conjugation to mark cellular proteins for degradation through the ubiquitin-proteasome system. Activates ubiquitin by first adenylating its C-terminal glycine residue with ATP, and thereafter linking this residue to the side chain of a cysteine residue in E1, yielding a ubiquitin-E1 thioester and free AMP. Essential for the formation of radiation-induced foci, timely DNA repair and for response to replication stress. Promotes the recruitment of TP53BP1 and BRCA1 at DNA damage sites. This chain is Ubiquitin-like modifier-activating enzyme 1 (Uba1), found in Mus musculus (Mouse).